We begin with the raw amino-acid sequence, 155 residues long: Glutaredoxin-related protein 5, mitochondrial (155 aa).

A mitochondrion-targeting transit peptide spans 1–14 (MNSVFRSTARCLRS). A Glutaredoxin domain is found at 42–145 (QKNLEEMVKK…EELQKLGIRS (104 aa)). Lysine 59 provides a ligand contact to glutathione. Cysteine 67 contacts [2Fe-2S] cluster. Glutathione-binding positions include 97–101 (RQGIK), isoleucine 109, and 122–123 (CD).

In terms of assembly, homodimer.

It is found in the mitochondrion. Its function is as follows. Monothiol glutaredoxin involved in mitochondrial iron-sulfur (Fe/S) cluster transfer. Receives iron-sulfur clusters from scaffold protein ISCU and mediates their transfer to apoproteins, to the 4Fe/FS cluster biosynthesis machinery, or export from mitochondrion. Required for normal hemoglobin biosynthesis. The chain is Glutaredoxin-related protein 5, mitochondrial (glrx5) from Danio rerio (Zebrafish).